The sequence spans 306 residues: MLAILFNFFLLTYFTNITLGKVGKSIDLDTRNGYNVHGCYKQTGKIYAHKTYPRQYEAENYNFDDLPVAWDWRNINGVNYASVDRNQHIPQYCGSCWAFGSTSALADRFNIKRKGAWPPAYLSVQEVIDCANAGSCEGGEPGPVYKYAHEFGIPHETCNNYQARDGTCSSYNKCGSCWPGSCFSIKNYTIYRVKNYGAVSGLHKMKAEIYHHGPIACGIAATKAFETYAGGIYNERTNEDIDHIISAHGWGVDSESGVPYWIGRNSWGTPWGENGWFRIVTSEYKNSSSKYNLKIEEDCVWADPIA.

The N-terminal stretch at 1–20 is a signal peptide; sequence MLAILFNFFLLTYFTNITLG. A propeptide spans 21–65 (activation peptide); that stretch reads KVGKSIDLDTRNGYNVHGCYKQTGKIYAHKTYPRQYEAENYNFDD. Disulfide bonds link Cys39–Cys96, Cys93–Cys136, Cys130–Cys168, Cys158–Cys174, and Cys177–Cys182. Residue Cys96 is part of the active site. The N-linked (GlcNAc...) asparagine glycan is linked to Asn187. Residues Cys217 and Cys299 are joined by a disulfide bond. Active-site residues include His243 and Asn265. An N-linked (GlcNAc...) asparagine glycan is attached at Asn286.

The protein belongs to the peptidase C1 family.

It localises to the cytoplasmic vesicle. It is found in the secretory vesicle. The protein localises to the secreted. It catalyses the reaction Release of C-terminal amino acid residues with broad specificity, but lacks action on C-terminal proline. Shows weak endopeptidase activity.. With respect to regulation, the disulfide bridge formed between Cys-39 in the propeptide and the active site residue Cys-96 may prevent activation of the zymogen through formation of a reversible covalent bond with the active site residue. Exhibits carboxy-monopeptidase as well as carboxy-dipeptidase activity. Plays an essential role in molting, a process during larval stages in which a new cuticle is formed and the old cuticle is shed. Required for the degradation and shedding of the old cuticle. The polypeptide is Cathepsin Z (Onchocerca volvulus).